A 289-amino-acid chain; its full sequence is Glycine--tRNA ligase alpha subunit (289 aa).

Belongs to the class-II aminoacyl-tRNA synthetase family. As to quaternary structure, tetramer of two alpha and two beta subunits.

Its subcellular location is the cytoplasm. It carries out the reaction tRNA(Gly) + glycine + ATP = glycyl-tRNA(Gly) + AMP + diphosphate. In Rickettsia bellii (strain OSU 85-389), this protein is Glycine--tRNA ligase alpha subunit.